A 549-amino-acid polypeptide reads, in one-letter code: Glucose-6-phosphate isomerase (549 aa).

Glutamate 355 (proton donor) is an active-site residue. Residues histidine 386 and lysine 514 contribute to the active site.

The protein belongs to the GPI family.

Its subcellular location is the cytoplasm. The catalysed reaction is alpha-D-glucose 6-phosphate = beta-D-fructose 6-phosphate. The protein operates within carbohydrate biosynthesis; gluconeogenesis. It functions in the pathway carbohydrate degradation; glycolysis; D-glyceraldehyde 3-phosphate and glycerone phosphate from D-glucose: step 2/4. Functionally, catalyzes the reversible isomerization of glucose-6-phosphate to fructose-6-phosphate. This chain is Glucose-6-phosphate isomerase, found in Salmonella agona (strain SL483).